A 286-amino-acid chain; its full sequence is 2-hydroxy-6-oxononadienedioate/2-hydroxy-6-oxononatrienedioate hydrolase (286 aa).

Positions V36 to H271 constitute an AB hydrolase-1 domain. The Proton acceptor role is filled by H265.

The protein belongs to the AB hydrolase superfamily. BphD family. In terms of assembly, homodimer.

The enzyme catalyses (2Z,4E)-2-hydroxy-6-oxonona-2,4-dienedioate + H2O = (2Z)-2-hydroxypenta-2,4-dienoate + succinate + H(+). It catalyses the reaction (2Z,4E,7E)-2-hydroxy-6-oxonona-2,4,7-trienedioate + H2O = (2Z)-2-hydroxypenta-2,4-dienoate + fumarate + H(+). It functions in the pathway aromatic compound metabolism; 3-phenylpropanoate degradation. Catalyzes the cleavage of the C5-C6 bond of 2-hydroxy-6-oxononadienedioate, and probably also 2-hydroxy-6-oxononatrienedioate, a dienol ring fission product of the bacterial meta-cleavage pathway for degradation of phenylpropionic acid. This Comamonas testosteroni (Pseudomonas testosteroni) protein is 2-hydroxy-6-oxononadienedioate/2-hydroxy-6-oxononatrienedioate hydrolase (mhpC).